The primary structure comprises 504 residues: MIVLTGHTLTIDEVRRVVYERERVAADEESMRAVEKSRAAVEQAISNGRTIYGVNTGFGKLADVRIEGSDLEQLQINLLRSHACAVGEPFAEDVVRAMLLLRANALLKGYSGVRPAVIEQLLAFLNTGIHPIVPQQGSLGASGDLAPLAHLALAFAGEGEAMYQGRRMPAAQALSQAGISPLSLQEKEGLALINGTQVMTAVGALAYLEAEQLAYDSEWIAALTIEALYGIVDAFDARIHAARGFQEQVEVAERLRRYLAGSQLTTRQGERRVQDAYSIRCLPQVHGASLRALRYVKETLEIEMNAATDNPLIFADGTALSGGNFHGQPVAIAMDLLKIAVAELANISERRIERLVNPQLSEGLPPFLSPQPGLQSGAMIMQYVAASLVSENKTLAHPASVDSIPSSANQEDHVSMGTTAARHAYMIVQNARKVLAIELICALQAVEARGIERMAPSTRQFYHKARRIVSSITADRVFSDDIEAVAAWLSERANHHFLRDEAKA.

Positions 141–143 form a cross-link, 5-imidazolinone (Ala-Gly); sequence ASG. Ser-142 bears the 2,3-didehydroalanine (Ser) mark.

Belongs to the PAL/histidase family. In terms of processing, contains an active site 4-methylidene-imidazol-5-one (MIO), which is formed autocatalytically by cyclization and dehydration of residues Ala-Ser-Gly.

It is found in the cytoplasm. The enzyme catalyses L-histidine = trans-urocanate + NH4(+). It functions in the pathway amino-acid degradation; L-histidine degradation into L-glutamate; N-formimidoyl-L-glutamate from L-histidine: step 1/3. The protein is Histidine ammonia-lyase of Geobacillus kaustophilus (strain HTA426).